We begin with the raw amino-acid sequence, 155 residues long: D-aminoacyl-tRNA deacylase (155 aa).

The Gly-cisPro motif, important for rejection of L-amino acids motif lies at 137–138 (GP).

Belongs to the DTD family. As to quaternary structure, homodimer.

It localises to the cytoplasm. It carries out the reaction glycyl-tRNA(Ala) + H2O = tRNA(Ala) + glycine + H(+). It catalyses the reaction a D-aminoacyl-tRNA + H2O = a tRNA + a D-alpha-amino acid + H(+). An aminoacyl-tRNA editing enzyme that deacylates mischarged D-aminoacyl-tRNAs. Also deacylates mischarged glycyl-tRNA(Ala), protecting cells against glycine mischarging by AlaRS. Acts via tRNA-based rather than protein-based catalysis; rejects L-amino acids rather than detecting D-amino acids in the active site. By recycling D-aminoacyl-tRNA to D-amino acids and free tRNA molecules, this enzyme counteracts the toxicity associated with the formation of D-aminoacyl-tRNA entities in vivo and helps enforce protein L-homochirality. The protein is D-aminoacyl-tRNA deacylase of Paracidovorax citrulli (strain AAC00-1) (Acidovorax citrulli).